Consider the following 299-residue polypeptide: ATP synthase gamma chain (299 aa).

It belongs to the ATPase gamma chain family. As to quaternary structure, F-type ATPases have 2 components, CF(1) - the catalytic core - and CF(0) - the membrane proton channel. CF(1) has five subunits: alpha(3), beta(3), gamma(1), delta(1), epsilon(1). CF(0) has three main subunits: a, b and c.

The protein resides in the cell inner membrane. Produces ATP from ADP in the presence of a proton gradient across the membrane. The gamma chain is believed to be important in regulating ATPase activity and the flow of protons through the CF(0) complex. This is ATP synthase gamma chain from Rhodospirillum rubrum.